An 83-amino-acid chain; its full sequence is Normal mucosa of esophagus-specific gene 1 protein (83 aa).

Belongs to the complex I NDUFA4 subunit family. In terms of tissue distribution, expressed mainly in stomach, placenta, small intestine and colon, as well as in normal mucosa of esophagus. Down-regulated in esophageal squamous cell carcinoma.

The protein resides in the nucleus. The chain is Normal mucosa of esophagus-specific gene 1 protein (NMES1) from Homo sapiens (Human).